The chain runs to 255 residues: Methylthioribulose-1-phosphate dehydratase (255 aa).

Residue cysteine 111 coordinates substrate. Zn(2+)-binding residues include histidine 128 and histidine 130. The active-site Proton donor/acceptor is the glutamate 157. A Zn(2+)-binding site is contributed by histidine 213.

The protein belongs to the aldolase class II family. MtnB subfamily. The cofactor is Zn(2+).

It localises to the cytoplasm. The catalysed reaction is 5-(methylsulfanyl)-D-ribulose 1-phosphate = 5-methylsulfanyl-2,3-dioxopentyl phosphate + H2O. It participates in amino-acid biosynthesis; L-methionine biosynthesis via salvage pathway; L-methionine from S-methyl-5-thio-alpha-D-ribose 1-phosphate: step 2/6. Functionally, catalyzes the dehydration of methylthioribulose-1-phosphate (MTRu-1-P) into 2,3-diketo-5-methylthiopentyl-1-phosphate (DK-MTP-1-P). The protein is Methylthioribulose-1-phosphate dehydratase of Talaromyces stipitatus (strain ATCC 10500 / CBS 375.48 / QM 6759 / NRRL 1006) (Penicillium stipitatum).